A 319-amino-acid polypeptide reads, in one-letter code: HPr kinase/phosphorylase (319 aa).

Catalysis depends on residues His146 and Lys167. 161–168 (GESGLGKS) provides a ligand contact to ATP. A Mg(2+)-binding site is contributed by Ser168. The Proton acceptor; for phosphorylation activity. Proton donor; for dephosphorylation activity role is filled by Asp185. An important for the catalytic mechanism of both phosphorylation and dephosphorylation region spans residues 209–218 (LEVRGIGLLD). Glu210 lines the Mg(2+) pocket. Arg252 is a catalytic residue. Residues 273–278 (QVVAGR) are important for the catalytic mechanism of dephosphorylation.

This sequence belongs to the HPrK/P family. In terms of assembly, homohexamer. It depends on Mg(2+) as a cofactor.

It carries out the reaction [HPr protein]-L-serine + ATP = [HPr protein]-O-phospho-L-serine + ADP + H(+). The catalysed reaction is [HPr protein]-O-phospho-L-serine + phosphate + H(+) = [HPr protein]-L-serine + diphosphate. Functionally, catalyzes the ATP- as well as the pyrophosphate-dependent phosphorylation of a specific serine residue in HPr, a phosphocarrier protein of the phosphoenolpyruvate-dependent sugar phosphotransferase system (PTS). HprK/P also catalyzes the pyrophosphate-producing, inorganic phosphate-dependent dephosphorylation (phosphorolysis) of seryl-phosphorylated HPr (P-Ser-HPr). The protein is HPr kinase/phosphorylase of Variovorax paradoxus (strain S110).